A 518-amino-acid polypeptide reads, in one-letter code: ATP synthase subunit beta 2 (518 aa).

Residue 154–161 (GGAGVGKT) participates in ATP binding. The disordered stretch occupies residues 455-518 (IDEAKGKAKP…TDHAADTHES (64 aa)). Basic and acidic residues-rich tracts occupy residues 473 to 485 (PDSK…DPKP) and 507 to 518 (PETDHAADTHES).

The protein belongs to the ATPase alpha/beta chains family. As to quaternary structure, F-type ATPases have 2 components, CF(1) - the catalytic core - and CF(0) - the membrane proton channel. CF(1) has five subunits: alpha(3), beta(3), gamma(1), delta(1), epsilon(1). CF(0) has three main subunits: a(1), b(2) and c(9-12). The alpha and beta chains form an alternating ring which encloses part of the gamma chain. CF(1) is attached to CF(0) by a central stalk formed by the gamma and epsilon chains, while a peripheral stalk is formed by the delta and b chains.

The protein localises to the cell inner membrane. The catalysed reaction is ATP + H2O + 4 H(+)(in) = ADP + phosphate + 5 H(+)(out). In terms of biological role, produces ATP from ADP in the presence of a proton gradient across the membrane. The catalytic sites are hosted primarily by the beta subunits. The polypeptide is ATP synthase subunit beta 2 (Albidiferax ferrireducens (strain ATCC BAA-621 / DSM 15236 / T118) (Rhodoferax ferrireducens)).